Reading from the N-terminus, the 392-residue chain is Stilbene synthase 2 (392 aa).

Residue 55–58 (KFNR) participates in substrate binding. Residue Cys164 is part of the active site. Substrate contacts are provided by residues Leu267 and 305-307 (GGP).

Belongs to the thiolase-like superfamily. Chalcone/stilbene synthases family. As to quaternary structure, homodimer.

It localises to the cytoplasm. The enzyme catalyses 4-coumaroyl-CoA + 3 malonyl-CoA + 3 H(+) = trans-resveratrol + 4 CO2 + 4 CoA. The protein operates within phytoalexin biosynthesis; 3,4',5-trihydroxystilbene biosynthesis; 3,4',5-trihydroxystilbene from trans-4-coumarate: step 2/2. Functionally, mediates resistance to pathogens which are sensitive to stilbenes. The polypeptide is Stilbene synthase 2 (Vitis vinifera (Grape)).